An 844-amino-acid chain; its full sequence is DNA mismatch repair protein MutS (844 aa).

Position 610–617 (610–617 (GPNMGGKS)) interacts with ATP.

It belongs to the DNA mismatch repair MutS family.

Its function is as follows. This protein is involved in the repair of mismatches in DNA. It is possible that it carries out the mismatch recognition step. This protein has a weak ATPase activity. The sequence is that of DNA mismatch repair protein MutS from Francisella tularensis subsp. novicida (strain U112).